Reading from the N-terminus, the 329-residue chain is NADH-quinone oxidoreductase subunit H (329 aa).

A run of 9 helical transmembrane segments spans residues 9–29 (LIKI…ATYI), 42–62 (GPCY…IKLF), 75–95 (FIFT…MAPI), 117–137 (IGFL…ILAG), 154–174 (IQLL…LMVV), 188–208 (GGFL…FLIA), 238–258 (LKWG…SFVI), 269–291 (WGFI…LSMW), and 309–329 (WKIM…VILI).

It belongs to the complex I subunit 1 family. In terms of assembly, NDH-1 is composed of 14 different subunits. Subunits NuoA, H, J, K, L, M, N constitute the membrane sector of the complex.

The protein resides in the cell inner membrane. It carries out the reaction a quinone + NADH + 5 H(+)(in) = a quinol + NAD(+) + 4 H(+)(out). In terms of biological role, NDH-1 shuttles electrons from NADH, via FMN and iron-sulfur (Fe-S) centers, to quinones in the respiratory chain. The immediate electron acceptor for the enzyme in this species is believed to be ubiquinone. Couples the redox reaction to proton translocation (for every two electrons transferred, four hydrogen ions are translocated across the cytoplasmic membrane), and thus conserves the redox energy in a proton gradient. This subunit may bind ubiquinone. In Helicobacter pylori (strain J99 / ATCC 700824) (Campylobacter pylori J99), this protein is NADH-quinone oxidoreductase subunit H.